The chain runs to 249 residues: 1-(5-phosphoribosyl)-5-[(5-phosphoribosylamino)methylideneamino] imidazole-4-carboxamide isomerase (249 aa).

Aspartate 8 functions as the Proton acceptor in the catalytic mechanism. Catalysis depends on aspartate 130, which acts as the Proton donor.

Belongs to the HisA/HisF family.

Its subcellular location is the cytoplasm. The catalysed reaction is 1-(5-phospho-beta-D-ribosyl)-5-[(5-phospho-beta-D-ribosylamino)methylideneamino]imidazole-4-carboxamide = 5-[(5-phospho-1-deoxy-D-ribulos-1-ylimino)methylamino]-1-(5-phospho-beta-D-ribosyl)imidazole-4-carboxamide. Its pathway is amino-acid biosynthesis; L-histidine biosynthesis; L-histidine from 5-phospho-alpha-D-ribose 1-diphosphate: step 4/9. The chain is 1-(5-phosphoribosyl)-5-[(5-phosphoribosylamino)methylideneamino] imidazole-4-carboxamide isomerase from Nitrosococcus oceani (strain ATCC 19707 / BCRC 17464 / JCM 30415 / NCIMB 11848 / C-107).